A 125-amino-acid chain; its full sequence is Ribonuclease P protein component (125 aa).

This sequence belongs to the RnpA family. Consists of a catalytic RNA component (M1 or rnpB) and a protein subunit.

The catalysed reaction is Endonucleolytic cleavage of RNA, removing 5'-extranucleotides from tRNA precursor.. RNaseP catalyzes the removal of the 5'-leader sequence from pre-tRNA to produce the mature 5'-terminus. It can also cleave other RNA substrates such as 4.5S RNA. The protein component plays an auxiliary but essential role in vivo by binding to the 5'-leader sequence and broadening the substrate specificity of the ribozyme. The sequence is that of Ribonuclease P protein component from Ruegeria pomeroyi (strain ATCC 700808 / DSM 15171 / DSS-3) (Silicibacter pomeroyi).